A 183-amino-acid polypeptide reads, in one-letter code: Adenine phosphoribosyltransferase (183 aa).

Belongs to the purine/pyrimidine phosphoribosyltransferase family. Homodimer.

Its subcellular location is the cytoplasm. The catalysed reaction is AMP + diphosphate = 5-phospho-alpha-D-ribose 1-diphosphate + adenine. The protein operates within purine metabolism; AMP biosynthesis via salvage pathway; AMP from adenine: step 1/1. Functionally, catalyzes a salvage reaction resulting in the formation of AMP, that is energically less costly than de novo synthesis. The sequence is that of Adenine phosphoribosyltransferase from Photorhabdus laumondii subsp. laumondii (strain DSM 15139 / CIP 105565 / TT01) (Photorhabdus luminescens subsp. laumondii).